Consider the following 307-residue polypeptide: Ribosomal protein uL3 glutamine methyltransferase (307 aa).

Belongs to the protein N5-glutamine methyltransferase family. PrmB subfamily.

It carries out the reaction L-glutaminyl-[ribosomal protein uL3] + S-adenosyl-L-methionine = N(5)-methyl-L-glutaminyl-[ribosomal protein uL3] + S-adenosyl-L-homocysteine + H(+). In terms of biological role, methylates large ribosomal subunit protein uL3 on a specific glutamine residue. In Burkholderia pseudomallei (strain K96243), this protein is Ribosomal protein uL3 glutamine methyltransferase.